A 500-amino-acid chain; its full sequence is Cobyric acid synthase (500 aa).

The region spanning 253-446 (KIGVAAIYFP…FHGFFDRPEV (194 aa)) is the GATase cobBQ-type domain. Catalysis depends on cysteine 334, which acts as the Nucleophile. Histidine 438 is an active-site residue.

The protein belongs to the CobB/CobQ family. CobQ subfamily.

Its pathway is cofactor biosynthesis; adenosylcobalamin biosynthesis. Its function is as follows. Catalyzes amidations at positions B, D, E, and G on adenosylcobyrinic A,C-diamide. NH(2) groups are provided by glutamine, and one molecule of ATP is hydrogenolyzed for each amidation. The sequence is that of Cobyric acid synthase from Chlorobaculum tepidum (strain ATCC 49652 / DSM 12025 / NBRC 103806 / TLS) (Chlorobium tepidum).